The following is a 343-amino-acid chain: Methylthioribose-1-phosphate isomerase (343 aa).

Residues 48 to 50 (RGA), Arg-88, and Gln-193 contribute to the substrate site. The Proton donor role is filled by Asp-234. Substrate is bound at residue 244 to 245 (NK).

Belongs to the eIF-2B alpha/beta/delta subunits family. MtnA subfamily.

The catalysed reaction is 5-(methylsulfanyl)-alpha-D-ribose 1-phosphate = 5-(methylsulfanyl)-D-ribulose 1-phosphate. It functions in the pathway amino-acid biosynthesis; L-methionine biosynthesis via salvage pathway; L-methionine from S-methyl-5-thio-alpha-D-ribose 1-phosphate: step 1/6. In terms of biological role, catalyzes the interconversion of methylthioribose-1-phosphate (MTR-1-P) into methylthioribulose-1-phosphate (MTRu-1-P). The protein is Methylthioribose-1-phosphate isomerase of Thermotoga maritima (strain ATCC 43589 / DSM 3109 / JCM 10099 / NBRC 100826 / MSB8).